A 647-amino-acid polypeptide reads, in one-letter code: Neutral endopeptidase (647 aa).

A Peptidase M13 domain is found at Met-1 to Trp-647. His-496 contacts Zn(2+). The active site involves Glu-497. Zn(2+)-binding residues include His-500 and Glu-556. Asp-560 functions as the Proton donor in the catalytic mechanism.

It belongs to the peptidase M13 family. Requires Zn(2+) as cofactor.

The chain is Neutral endopeptidase (pepO) from Lactobacillus helveticus (Lactobacillus suntoryeus).